The sequence spans 1129 residues: Tyrosine-protein kinase JAK2 (1129 aa).

The region spanning 35-378 (PLLQVYLYYS…GYYRLTADAH (344 aa)) is the FERM domain. Tyrosine 117 is subject to Phosphotyrosine; by autocatalysis. An SH2; atypical domain is found at 399 to 480 (HGPIFMDFAI…NLKDLLTCYQ (82 aa)). Protein kinase domains lie at 542-806 (LIFE…NSLF) and 846-1118 (LKFL…DLAQ). Residue 852-860 (LGKGNFGSV) coordinates ATP. At tyrosine 865 the chain carries Phosphotyrosine; by autocatalysis. Lysine 879 is a binding site for ATP. Phosphotyrosine; by autocatalysis occurs at positions 963 and 969. Aspartate 973 functions as the Proton acceptor in the catalytic mechanism. Tyrosine 1004 and tyrosine 1005 each carry phosphotyrosine; by autocatalysis.

It belongs to the protein kinase superfamily. Tyr protein kinase family. JAK subfamily. In terms of processing, autophosphorylated, leading to regulate its activity.

It localises to the endomembrane system. The protein resides in the nucleus. It catalyses the reaction L-tyrosyl-[protein] + ATP = O-phospho-L-tyrosyl-[protein] + ADP + H(+). Its activity is regulated as follows. Regulated by autophosphorylation, can both activate or decrease activity. Heme regulates its activity by enhancing the phosphorylation on Tyr-1004 and Tyr-1005. Functionally, non-receptor tyrosine kinase involved in various processes such as cell growth, development, differentiation or histone modifications. Mediates essential signaling events in both innate and adaptive immunity. In the cytoplasm, plays a pivotal role in signal transduction via its association with cytokine receptors. Following ligand-binding to cell surface receptors, phosphorylates specific tyrosine residues on the cytoplasmic tails of the receptor, creating docking sites for STATs proteins. Subsequently, phosphorylates the STATs proteins once they are recruited to the receptor. Phosphorylated STATs then form homodimer or heterodimers and translocate to the nucleus to activate gene transcription. For example, cell stimulation with erythropoietin (EPO) during erythropoiesis leads to JAK2 autophosphorylation, activation, and its association with erythropoietin receptor (EPOR) that becomes phosphorylated in its cytoplasmic domain. Then, STAT5 (STAT5A or STAT5B) is recruited, phosphorylated and activated by JAK2. Once activated, dimerized STAT5 translocates into the nucleus and promotes the transcription of several essential genes involved in the modulation of erythropoiesis. Part of a signaling cascade that is activated by increased cellular retinol and that leads to the activation of STAT5 (STAT5A or STAT5B). In the nucleus, plays a key role in chromatin by specifically mediating phosphorylation of 'Tyr-41' of histone H3 (H3Y41ph), a specific tag that promotes exclusion of CBX5 (HP1 alpha) from chromatin. Up-regulates the potassium voltage-gated channel activity of KCNA3. The protein is Tyrosine-protein kinase JAK2 of Gallus gallus (Chicken).